Here is a 152-residue protein sequence, read N- to C-terminus: 3-hydroxyacyl-[acyl-carrier-protein] dehydratase FabZ (152 aa).

Residue H54 is part of the active site.

It belongs to the thioester dehydratase family. FabZ subfamily.

The protein localises to the cytoplasm. The enzyme catalyses a (3R)-hydroxyacyl-[ACP] = a (2E)-enoyl-[ACP] + H2O. Its function is as follows. Involved in unsaturated fatty acids biosynthesis. Catalyzes the dehydration of short chain beta-hydroxyacyl-ACPs and long chain saturated and unsaturated beta-hydroxyacyl-ACPs. The chain is 3-hydroxyacyl-[acyl-carrier-protein] dehydratase FabZ from Buchnera aphidicola subsp. Schizaphis graminum (strain Sg).